The sequence spans 160 residues: Lymphocyte antigen 96 (160 aa).

The N-terminal stretch at 1–18 (MLPFLFFSTLFSSIFTEA) is a signal peptide. Cystine bridges form between cysteine 25–cysteine 51, cysteine 37–cysteine 148, and cysteine 95–cysteine 105. N-linked (GlcNAc...) asparagine glycosylation occurs at asparagine 26. Asparagine 114 carries an N-linked (GlcNAc...) asparagine glycan. The tract at residues 119 to 123 (FSFKG) is interaction with lipopolysaccharide.

Heterogeneous homomer formed from homodimers; disulfide-linked. Belongs to the lipopolysaccharide (LPS) receptor, a multi-protein complex containing at least CD14, LY96 and TLR4. Binds to the extracellular domains of TLR2 and TLR4. Ligand binding induces interaction with TLR4 and oligomerization of the complex. Post-translationally, N-glycosylated; high-mannose.

It localises to the secreted. It is found in the extracellular space. Binds bacterial lipopolysaccharide (LPS). Cooperates with TLR4 in the innate immune response to bacterial lipopolysaccharide (LPS), and with TLR2 in the response to cell wall components from Gram-positive and Gram-negative bacteria. Enhances TLR4-dependent activation of NF-kappa-B. Cells expressing both LY96 and TLR4, but not TLR4 alone, respond to LPS. The protein is Lymphocyte antigen 96 (LY96) of Homo sapiens (Human).